The following is an 82-amino-acid chain: Small ribosomal subunit protein bS16 (82 aa).

This sequence belongs to the bacterial ribosomal protein bS16 family.

In Aeromonas hydrophila subsp. hydrophila (strain ATCC 7966 / DSM 30187 / BCRC 13018 / CCUG 14551 / JCM 1027 / KCTC 2358 / NCIMB 9240 / NCTC 8049), this protein is Small ribosomal subunit protein bS16.